We begin with the raw amino-acid sequence, 271 residues long: Fatty acid elongase A (271 aa).

Transmembrane regions (helical) follow at residues isoleucine 35–phenylalanine 55, alanine 68–isoleucine 88, isoleucine 102–serine 122, serine 139–leucine 159, cysteine 165–phenylalanine 185, histidine 198–tyrosine 220, and threonine 237–valine 257.

This sequence belongs to the ELO family.

The protein resides in the membrane. The enzyme catalyses a very-long-chain acyl-CoA + malonyl-CoA + H(+) = a very-long-chain 3-oxoacyl-CoA + CO2 + CoA. In terms of biological role, fatty acid elongase with strict substrate specificity for monounsaturated fatty acids, in particular 16:1 (delta-9) to produce the unusual 18:1 (delta-11) fatty acid. This Dictyostelium discoideum (Social amoeba) protein is Fatty acid elongase A (eloA).